The sequence spans 318 residues: NADH-ubiquinone oxidoreductase chain 1 (318 aa).

Helical transmembrane passes span 2–22 (FLMN…FLTL), 37–57 (PNIV…KLFI), 69–89 (LMFT…WIPM), 100–120 (LGVL…LWSG), 136–156 (VAQT…TMMM), 171–191 (HMWL…STLA), 206–226 (ELVS…FFMA), 253–273 (ELFT…FLWI), and 294–314 (LPLT…SAGI).

This sequence belongs to the complex I subunit 1 family.

Its subcellular location is the mitochondrion inner membrane. The catalysed reaction is a ubiquinone + NADH + 5 H(+)(in) = a ubiquinol + NAD(+) + 4 H(+)(out). Core subunit of the mitochondrial membrane respiratory chain NADH dehydrogenase (Complex I) that is believed to belong to the minimal assembly required for catalysis. Complex I functions in the transfer of electrons from NADH to the respiratory chain. The immediate electron acceptor for the enzyme is believed to be ubiquinone. The chain is NADH-ubiquinone oxidoreductase chain 1 (MT-ND1) from Tolypeutes matacus (Southern three-banded armadillo).